Reading from the N-terminus, the 360-residue chain is Peptide chain release factor 1 (360 aa).

The residue at position 235 (glutamine 235) is an N5-methylglutamine. Positions 284–313 (AKRQQAEASTRRNLLGSGDRSDRNRTYNFP) are disordered.

It belongs to the prokaryotic/mitochondrial release factor family. Methylated by PrmC. Methylation increases the termination efficiency of RF1.

The protein resides in the cytoplasm. Peptide chain release factor 1 directs the termination of translation in response to the peptide chain termination codons UAG and UAA. The polypeptide is Peptide chain release factor 1 (Salmonella arizonae (strain ATCC BAA-731 / CDC346-86 / RSK2980)).